We begin with the raw amino-acid sequence, 303 residues long: N-acetyl-D-glucosamine kinase (303 aa).

ATP is bound by residues 4–11 (GFDIGGTK) and 133–140 (GVGGGLVL). Residues His157, Cys177, Cys179, and Cys184 each coordinate Zn(2+).

The protein belongs to the ROK (NagC/XylR) family. NagK subfamily.

It catalyses the reaction N-acetyl-D-glucosamine + ATP = N-acetyl-D-glucosamine 6-phosphate + ADP + H(+). The protein operates within cell wall biogenesis; peptidoglycan recycling. In terms of biological role, catalyzes the phosphorylation of N-acetyl-D-glucosamine (GlcNAc) derived from cell-wall degradation, yielding GlcNAc-6-P. The polypeptide is N-acetyl-D-glucosamine kinase (Salmonella arizonae (strain ATCC BAA-731 / CDC346-86 / RSK2980)).